We begin with the raw amino-acid sequence, 112 residues long: cAMP-regulated phosphoprotein 19 (112 aa).

N-acetylmethionine is present on M1. The span at 1–11 (MSAEVPEAASA) shows a compositional bias: low complexity. A disordered region spans residues 1–49 (MSAEVPEAASAEEQKEMEDKVTSPEKAEEAKLKARYPHLGQKPGGSDFL). Position 2 is an N-acetylserine (S2). S2 and S23 each carry phosphoserine. Residues 12–32 (EEQKEMEDKVTSPEKAEEAKL) are compositionally biased toward basic and acidic residues. Phosphoserine; by GWL is present on residues S62 and S104. The tract at residues 72–112 (MKNKQLPTATPDKTEVTGDHIPTPQDLPQRKPSLVASKLAG) is disordered. Phosphoserine; by PKA is present on S104. Residue K109 is modified to N6-acetyllysine.

Interacts (when phosphorylated at Ser-62) with PPP2R2D. Interacts with SNCA. Interacts with PPP2R2A; the interaction is direct and this interaction inhibits PP2A activity. Phosphorylation at Ser-62 by MASTL/GWL during mitosis is essential for interaction with PPP2R2D (PR55-delta) and subsequent inactivation of PP2A. Phosphorylated by PKA. Isoform ARPP-19 is found in all brain regions and also present in non-neuronal tissues. Isoform ARPP-16 is enriched in the caudate nucleus, found in low levels in cerebral cortex.

It is found in the cytoplasm. Its function is as follows. Protein phosphatase inhibitor that specifically inhibits protein phosphatase 2A (PP2A) during mitosis. Inhibition of PP2A is enhanced when ARPP19 is phosphorylated. When phosphorylated at Ser-62 during mitosis, specifically interacts with PPP2R2D (PR55-delta) and inhibits its activity, leading to inactivation of PP2A, an essential condition to keep cyclin-B1-CDK1 activity high during M phase. May indirectly enhance GAP-43 expression. This chain is cAMP-regulated phosphoprotein 19 (ARPP19), found in Bos taurus (Bovine).